The primary structure comprises 117 residues: Large ribosomal subunit protein bL20c (117 aa).

Belongs to the bacterial ribosomal protein bL20 family.

The protein localises to the plastid. The protein resides in the chloroplast. In terms of biological role, binds directly to 23S ribosomal RNA and is necessary for the in vitro assembly process of the 50S ribosomal subunit. It is not involved in the protein synthesizing functions of that subunit. The chain is Large ribosomal subunit protein bL20c from Olimarabidopsis pumila (Dwarf rocket).